We begin with the raw amino-acid sequence, 360 residues long: Geranylgeranyl pyrophosphate synthase 3, chloroplastic (360 aa).

The transit peptide at 1–39 directs the protein to the chloroplast; that stretch reads MATTVHLSSFSLFIQSRGRRDNSISSVKSLKKRTGLSPS. The segment at 24 to 54 is disordered; sequence ISSVKSLKKRTGLSPSSALTSQGGRDMIPPE. Residues 36–46 are compositionally biased toward polar residues; it reads LSPSSALTSQG. Isopentenyl diphosphate is bound by residues lysine 106, arginine 109, and histidine 138. 2 residues coordinate Mg(2+): aspartate 145 and aspartate 151. Position 156 (arginine 156) interacts with dimethylallyl diphosphate. Arginine 157 lines the isopentenyl diphosphate pocket. Dimethylallyl diphosphate is bound by residues lysine 245, threonine 246, glutamine 283, lysine 300, and lysine 310.

It belongs to the FPP/GGPP synthase family. In terms of assembly, monomer. The cofactor is Mg(2+). In terms of tissue distribution, mainly expressed in roots.

The protein localises to the plastid. It localises to the chloroplast. The enzyme catalyses isopentenyl diphosphate + dimethylallyl diphosphate = (2E)-geranyl diphosphate + diphosphate. It carries out the reaction isopentenyl diphosphate + (2E)-geranyl diphosphate = (2E,6E)-farnesyl diphosphate + diphosphate. It catalyses the reaction isopentenyl diphosphate + (2E,6E)-farnesyl diphosphate = (2E,6E,10E)-geranylgeranyl diphosphate + diphosphate. It functions in the pathway isoprenoid biosynthesis; farnesyl diphosphate biosynthesis; farnesyl diphosphate from geranyl diphosphate and isopentenyl diphosphate: step 1/1. Its pathway is isoprenoid biosynthesis; geranyl diphosphate biosynthesis; geranyl diphosphate from dimethylallyl diphosphate and isopentenyl diphosphate: step 1/1. It participates in isoprenoid biosynthesis; geranylgeranyl diphosphate biosynthesis; geranylgeranyl diphosphate from farnesyl diphosphate and isopentenyl diphosphate: step 1/1. Its function is as follows. Catalyzes the trans-addition of the three molecules of IPP onto DMAPP to form geranylgeranyl pyrophosphate. The protein is Geranylgeranyl pyrophosphate synthase 3, chloroplastic (GGPP3) of Arabidopsis thaliana (Mouse-ear cress).